Reading from the N-terminus, the 430-residue chain is Spermatogenic leucine zipper protein 1 (430 aa).

The segment at 1-25 is disordered; sequence MASSAKSAEMPTISKTVNPTPDPHQ. The stretch at 62 to 102 forms a coiled coil; the sequence is EQQTAQKFNNLLKEIKDILKNMAGFEEKITEAKELFEETNI. Ser107 carries the phosphoserine modification. Positions 166–177 are helix-loop-helix motif; sequence KINEMLSTNLPV. The basic motif stretch occupies residues 178-244; sequence SLAPEKEDNE…NVQEETMKIR (67 aa). Coiled coils occupy residues 214-269 and 316-351; these read LEEK…KLIK and SLQL…TLQE. Ser258 carries the post-translational modification Phosphoserine. The tract at residues 303 to 324 is leucine-zipper; it reads LEEQVKKLSHDTYSLQLMAALL.

As to quaternary structure, interacts with PPP1CC isoform gamma-2. In terms of processing, phosphorylated by MAPK1/ERK2 and MAPK3/ERK1. As to expression, specifically and strongly expressed in the testis. Expressed in several tumor cell lines.

It localises to the cytoplasm. It is found in the nucleus. Functionally, transcription factor that binds to the DNA sequence 5'-CANNTG-3'(E box) and the G-box motif. May play an important role in the regulation of cell proliferation and differentiation during spermatogenesis. In Homo sapiens (Human), this protein is Spermatogenic leucine zipper protein 1 (SPZ1).